Reading from the N-terminus, the 265-residue chain is Type III pantothenate kinase (265 aa).

Position 6-13 (aspartate 6–valine 13) interacts with ATP. Glycine 112–arginine 115 serves as a coordination point for substrate. Aspartate 114 functions as the Proton acceptor in the catalytic mechanism. Aspartate 134 contacts K(+). ATP is bound at residue threonine 137. A substrate-binding site is contributed by threonine 189.

Belongs to the type III pantothenate kinase family. In terms of assembly, homodimer. The cofactor is NH4(+). K(+) serves as cofactor.

The protein resides in the cytoplasm. The catalysed reaction is (R)-pantothenate + ATP = (R)-4'-phosphopantothenate + ADP + H(+). Its pathway is cofactor biosynthesis; coenzyme A biosynthesis; CoA from (R)-pantothenate: step 1/5. Its function is as follows. Catalyzes the phosphorylation of pantothenate (Pan), the first step in CoA biosynthesis. The sequence is that of Type III pantothenate kinase from Streptomyces avermitilis (strain ATCC 31267 / DSM 46492 / JCM 5070 / NBRC 14893 / NCIMB 12804 / NRRL 8165 / MA-4680).